The primary structure comprises 360 residues: UPF0496 protein At3g19250 (360 aa).

The disordered stretch occupies residues 1–29; the sequence is MPHCFTFKPASPEGSLGDDHLPHPSPEGS. 2 helical membrane passes run 205-225 and 229-249; these read HHAT…VAAS and IAYH…TPYL.

It belongs to the UPF0496 family.

The protein resides in the membrane. This is UPF0496 protein At3g19250 from Arabidopsis thaliana (Mouse-ear cress).